Reading from the N-terminus, the 483-residue chain is Probable cytosol aminopeptidase (483 aa).

Residues K252 and D257 each contribute to the Mn(2+) site. The active site involves K264. D275, D334, and E336 together coordinate Mn(2+). R338 is an active-site residue.

It belongs to the peptidase M17 family. Mn(2+) is required as a cofactor.

The protein resides in the cytoplasm. It carries out the reaction Release of an N-terminal amino acid, Xaa-|-Yaa-, in which Xaa is preferably Leu, but may be other amino acids including Pro although not Arg or Lys, and Yaa may be Pro. Amino acid amides and methyl esters are also readily hydrolyzed, but rates on arylamides are exceedingly low.. The catalysed reaction is Release of an N-terminal amino acid, preferentially leucine, but not glutamic or aspartic acids.. Presumably involved in the processing and regular turnover of intracellular proteins. Catalyzes the removal of unsubstituted N-terminal amino acids from various peptides. The sequence is that of Probable cytosol aminopeptidase from Legionella pneumophila (strain Paris).